We begin with the raw amino-acid sequence, 366 residues long: tRNA/tmRNA (uracil-C(5))-methyltransferase (366 aa).

5 residues coordinate S-adenosyl-L-methionine: glutamine 190, tyrosine 218, asparagine 223, glutamate 239, and aspartate 299. The active-site Nucleophile is cysteine 324. The Proton acceptor role is filled by glutamate 358.

The protein belongs to the class I-like SAM-binding methyltransferase superfamily. RNA M5U methyltransferase family. TrmA subfamily.

The catalysed reaction is uridine(54) in tRNA + S-adenosyl-L-methionine = 5-methyluridine(54) in tRNA + S-adenosyl-L-homocysteine + H(+). It catalyses the reaction uridine(341) in tmRNA + S-adenosyl-L-methionine = 5-methyluridine(341) in tmRNA + S-adenosyl-L-homocysteine + H(+). Dual-specificity methyltransferase that catalyzes the formation of 5-methyluridine at position 54 (m5U54) in all tRNAs, and that of position 341 (m5U341) in tmRNA (transfer-mRNA). The sequence is that of tRNA/tmRNA (uracil-C(5))-methyltransferase from Escherichia coli (strain UTI89 / UPEC).